The chain runs to 1264 residues: Kinesin-like protein KIN-14B (1264 aa).

The segment covering M1–W10 has biased composition (polar residues). The segment at M1 to S52 is disordered. Basic and acidic residues predominate over residues E18 to H30. A coiled-coil region spans residues E53–E84. A Kinesin motor domain is found at N138–T452. G219–T226 is an ATP binding site. Coiled-coil stretches lie at residues I462–V511, Q545–D592, and T617–K640. Residues A588–A615 are disordered. Positions L589 to L600 are enriched in basic and acidic residues. Residues S652 to Q668 are compositionally biased toward low complexity. 2 disordered regions span residues S652 to K684 and P1117 to S1136.

This sequence belongs to the TRAFAC class myosin-kinesin ATPase superfamily. Kinesin family. KIN-14 subfamily. As to quaternary structure, homodimer and heterodimer with KCA1. Interacts with CDKA-1. Interacts with At4g14310. In terms of tissue distribution, expressed in roots, leaves, stems and flowers.

It is found in the cell membrane. Functionally, kinesin-like protein required for chloroplast movements and anchor to the plasma membrane. Mediates chloroplast movement via chloroplast actin (cp-actin) filaments. Required for the chloroplast avoidance response under high intensity blue light. Mediates redundantly with CHUP1 the nuclear avoidance response under high intensity blue light. May be involved in division plane determination. The sequence is that of Kinesin-like protein KIN-14B from Arabidopsis thaliana (Mouse-ear cress).